A 285-amino-acid chain; its full sequence is Probable endonuclease 4 (285 aa).

H69, H109, E145, D179, H182, H216, D229, H231, and E261 together coordinate Zn(2+).

It belongs to the AP endonuclease 2 family. Zn(2+) serves as cofactor.

It catalyses the reaction Endonucleolytic cleavage to 5'-phosphooligonucleotide end-products.. In terms of biological role, endonuclease IV plays a role in DNA repair. It cleaves phosphodiester bonds at apurinic or apyrimidinic (AP) sites, generating a 3'-hydroxyl group and a 5'-terminal sugar phosphate. This Escherichia coli O81 (strain ED1a) protein is Probable endonuclease 4.